Here is a 904-residue protein sequence, read N- to C-terminus: E3 SUMO-protein ligase SIZ1 (904 aa).

The segment covering 1-13 (MINLEDYWEDETP) has biased composition (acidic residues). A disordered region spans residues 1 to 21 (MINLEDYWEDETPGPDREPTN). One can recognise an SAP domain in the interval 34-68 (MELLKVSELKDICRSVSFPVSGRKAVLQDLIRNFL). The interval 122 to 170 (MEGPPTVQQQSPSVIRQSPTQRRKTSTTSSTSRAPPPTNPDASSSSSSF) is disordered. Polar residues predominate over residues 127–136 (TVQQQSPSVI). Residue serine 132 is modified to Phosphoserine. Residues 137-154 (RQSPTQRRKTSTTSSTSR) are compositionally biased toward low complexity. Residues 162–314 (DASSSSSSFA…KLFGYIVEMI (153 aa)) enclose the PINIT domain. The segment at 344–431 (EDEEMGLTTT…LQNCQKNVEQ (88 aa)) adopts an SP-RING-type zinc-finger fold. Positions 377, 379, 400, and 403 each coordinate Zn(2+). Disordered stretches follow at residues 443–584 (ILED…DDDR), 596–616 (STNT…TLDP), and 672–733 (SPDV…ISDS). The segment covering 444 to 454 (LEDDDDSDSDS) has biased composition (acidic residues). A compositionally biased stretch (basic and acidic residues) spans 501–511 (NNHDDSNRHSN). A compositionally biased stretch (low complexity) spans 512-553 (DNNNNSIKNNDSHNKNNNNNNNNNNNNNDNNNSIENNDSNSN). Composition is skewed to polar residues over residues 561 to 574 (RSNT…KNLM), 596 to 611 (STNT…SAPS), and 672 to 683 (SPDVSVSSPTPR). Low complexity predominate over residues 684–699 (NTASNASSSALSTPPL). Residues 721-733 (INSNSYTASISDS) are compositionally biased toward polar residues. The residue at position 794 (serine 794) is a Phosphoserine. The segment at 794–904 (SLPTTEAITR…QDYGKKYNSG (111 aa)) is required for localization at the bud neck. The span at 877 to 894 (RQLSNTSSTSPIMGTWKT) shows a compositional bias: polar residues. Positions 877-904 (RQLSNTSSTSPIMGTWKTQDYGKKYNSG) are disordered.

This sequence belongs to the PIAS family. As to quaternary structure, interacts with UBC9 and CDC3. Phosphorylated in early M-phase. In terms of processing, autosumoylated upon ethanol stress.

It localises to the cytoplasm. Its subcellular location is the nucleus. The protein resides in the bud neck. Its pathway is protein modification; protein sumoylation. Functionally, acts as an E3 ligase mediating SUMO/Smt3 attachment to septins and PCNA. May be involved in chromosome maintenance. The chain is E3 SUMO-protein ligase SIZ1 (SIZ1) from Saccharomyces cerevisiae (strain ATCC 204508 / S288c) (Baker's yeast).